A 383-amino-acid chain; its full sequence is Putative glutamate--cysteine ligase 2-2 (383 aa).

The segment at 35-56 (RGDRDGAGGPPGGADPDGDLDG) is disordered.

The protein belongs to the glutamate--cysteine ligase type 2 family. YbdK subfamily.

It catalyses the reaction L-cysteine + L-glutamate + ATP = gamma-L-glutamyl-L-cysteine + ADP + phosphate + H(+). ATP-dependent carboxylate-amine ligase which exhibits weak glutamate--cysteine ligase activity. The chain is Putative glutamate--cysteine ligase 2-2 from Frankia alni (strain DSM 45986 / CECT 9034 / ACN14a).